Here is a 290-residue protein sequence, read N- to C-terminus: Cell division protein ZipA (290 aa).

A topological domain (periplasmic) is located at residue methionine 1. Residues 2–22 (DIGLREWLIVIGLIVIAGILF) traverse the membrane as a helical segment. The Cytoplasmic segment spans residues 23-290 (DGWRRMRGGK…HERRSLMQKR (268 aa)). Residues 66 to 143 (REPSFDEQDL…REKAPSVAAA (78 aa)) form a disordered region. Basic and acidic residues predominate over residues 81–99 (REGKERKGGKRQDEPRQGD). Over residues 100–114 (LDLDEGMALEADPSD) the composition is skewed to acidic residues.

The protein belongs to the ZipA family. As to quaternary structure, interacts with FtsZ via their C-terminal domains.

It is found in the cell inner membrane. Essential cell division protein that stabilizes the FtsZ protofilaments by cross-linking them and that serves as a cytoplasmic membrane anchor for the Z ring. Also required for the recruitment to the septal ring of downstream cell division proteins. This Pseudomonas paraeruginosa (strain DSM 24068 / PA7) (Pseudomonas aeruginosa (strain PA7)) protein is Cell division protein ZipA.